The primary structure comprises 189 residues: uncharacterized protein (189 aa).

This sequence belongs to the OsmC/Ohr family.

This is an uncharacterized protein from Methanocaldococcus jannaschii (strain ATCC 43067 / DSM 2661 / JAL-1 / JCM 10045 / NBRC 100440) (Methanococcus jannaschii).